Here is a 249-residue protein sequence, read N- to C-terminus: Small ribosomal subunit protein eS6 (249 aa).

Lysine 14 participates in a covalent cross-link: Glycyl lysine isopeptide (Lys-Gly) (interchain with G-Cter in SUMO2). Glutamate 35 carries the post-translational modification ADP-ribosyl glutamic acid. A (3R)-3-hydroxyarginine modification is found at arginine 137. Serine 148 is subject to Phosphoserine. Lysine 211 is modified (N6-acetyllysine). The span at 217–229 (MKEAKEKRQEQIA) shows a compositional bias: basic and acidic residues. The segment at 217–249 (MKEAKEKRQEQIAKRRRLSSLRASTSKSESSQK) is disordered. Serine 235 and serine 236 each carry phosphoserine; by RPS6KA1, RPS6KA3, DAPK1 and PASK. The span at 236–249 (SLRASTSKSESSQK) shows a compositional bias: low complexity. Phosphoserine is present on residues serine 240, serine 242, serine 244, and serine 247.

The protein belongs to the eukaryotic ribosomal protein eS6 family. As to quaternary structure, component of the small ribosomal subunit. Part of the small subunit (SSU) processome, composed of more than 70 proteins and the RNA chaperone small nucleolar RNA (snoRNA) U3. Post-translationally, ribosomal protein S6 is the major substrate of protein kinases in eukaryote ribosomes. The phosphorylation is stimulated by growth factors, tumor promoting agents, and mitogens. It is dephosphorylated at growth arrest. Phosphorylated at Ser-235 and Ser-236 by RPS6KA1 and RPS6KA3; phosphorylation at these sites facilitates the assembly of the pre-initiation complex. In terms of processing, specifically hydroxylated (with R stereochemistry) at C-3 of Arg-137 by KDM8. Mono-ADP-ribosylation at Glu-35 by PARP16 inhibits polysome assembly and mRNA loading, thereby inhibiting protein translation.

It is found in the cytoplasm. It localises to the nucleus. The protein localises to the nucleolus. Its function is as follows. Component of the 40S small ribosomal subunit. Plays an important role in controlling cell growth and proliferation through the selective translation of particular classes of mRNA. Part of the small subunit (SSU) processome, first precursor of the small eukaryotic ribosomal subunit. During the assembly of the SSU processome in the nucleolus, many ribosome biogenesis factors, an RNA chaperone and ribosomal proteins associate with the nascent pre-rRNA and work in concert to generate RNA folding, modifications, rearrangements and cleavage as well as targeted degradation of pre-ribosomal RNA by the RNA exosome. The chain is Small ribosomal subunit protein eS6 (RPS6) from Bos taurus (Bovine).